The sequence spans 95 residues: Large ribosomal subunit protein bL27 (95 aa).

A propeptide spanning residues methionine 1 to phenylalanine 6 is cleaved from the precursor.

The protein belongs to the bacterial ribosomal protein bL27 family. Post-translationally, the N-terminus is cleaved by ribosomal processing cysteine protease Prp.

This Caldanaerobacter subterraneus subsp. tengcongensis (strain DSM 15242 / JCM 11007 / NBRC 100824 / MB4) (Thermoanaerobacter tengcongensis) protein is Large ribosomal subunit protein bL27.